A 195-amino-acid chain; its full sequence is MSEIKLIVGLANPGAEYAQTRHNAGAWYVEELARICGVSLVPDSKYFGLTARAVLHGKDVRLLIPTTYMNLSGKAVGALANFFRITPEEILVAHDELDMPPGVAKFKLGGGHGGHNGLKDIIAKLANDKNFYRLRIGIGHPGDKNKVSGYVLGKAPAKEQELINAAVDEAVRSTEVLFKEDMVKAMTRLHSFKAE.

Y17 serves as a coordination point for tRNA. H22 serves as the catalytic Proton acceptor. Residues Y68, N70, and N116 each coordinate tRNA.

This sequence belongs to the PTH family. As to quaternary structure, monomer.

It localises to the cytoplasm. The catalysed reaction is an N-acyl-L-alpha-aminoacyl-tRNA + H2O = an N-acyl-L-amino acid + a tRNA + H(+). In terms of biological role, hydrolyzes ribosome-free peptidyl-tRNAs (with 1 or more amino acids incorporated), which drop off the ribosome during protein synthesis, or as a result of ribosome stalling. Catalyzes the release of premature peptidyl moieties from peptidyl-tRNA molecules trapped in stalled 50S ribosomal subunits, and thus maintains levels of free tRNAs and 50S ribosomes. The polypeptide is Peptidyl-tRNA hydrolase (Shewanella sp. (strain MR-4)).